The primary structure comprises 303 residues: Putative CRISPR-associated endonuclease Cas1 2 (303 aa).

E149 provides a ligand contact to Mn(2+).

Belongs to the CRISPR-associated endonuclease Cas1 family. In terms of assembly, homodimer, forms a heterotetramer with a Cas2 homodimer. The cofactor is Mg(2+). Mn(2+) serves as cofactor.

CRISPR (clustered regularly interspaced short palindromic repeat), is an adaptive immune system that provides protection against mobile genetic elements (viruses, transposable elements and conjugative plasmids). CRISPR clusters contain sequences complementary to antecedent mobile elements and target invading nucleic acids. CRISPR clusters are transcribed and processed into CRISPR RNA (crRNA). Acts as a dsDNA endonuclease. Involved in the integration of spacer DNA into the CRISPR cassette. This is Putative CRISPR-associated endonuclease Cas1 2 from Methanospirillum hungatei JF-1 (strain ATCC 27890 / DSM 864 / NBRC 100397 / JF-1).